The following is a 455-amino-acid chain: Pup--protein ligase (455 aa).

Glu-12 serves as a coordination point for Mg(2+). An ATP-binding site is contributed by Arg-56. Tyr-58 contacts Mg(2+). Asp-60 acts as the Proton acceptor in catalysis. Residue Glu-66 coordinates Mg(2+). ATP is bound by residues Thr-69 and Trp-422.

The protein belongs to the Pup ligase/Pup deamidase family. Pup-conjugating enzyme subfamily.

It catalyses the reaction ATP + [prokaryotic ubiquitin-like protein]-L-glutamate + [protein]-L-lysine = ADP + phosphate + N(6)-([prokaryotic ubiquitin-like protein]-gamma-L-glutamyl)-[protein]-L-lysine.. It functions in the pathway protein degradation; proteasomal Pup-dependent pathway. It participates in protein modification; protein pupylation. In terms of biological role, catalyzes the covalent attachment of the prokaryotic ubiquitin-like protein modifier Pup to the proteasomal substrate proteins, thereby targeting them for proteasomal degradation. This tagging system is termed pupylation. The ligation reaction involves the side-chain carboxylate of the C-terminal glutamate of Pup and the side-chain amino group of a substrate lysine. The polypeptide is Pup--protein ligase (Acidimicrobium ferrooxidans (strain DSM 10331 / JCM 15462 / NBRC 103882 / ICP)).